The sequence spans 387 residues: Cysteine desulfurase IscS (387 aa).

Pyridoxal 5'-phosphate is bound by residues 73–74, Asn155, Gln183, and 203–205; these read AT and SAH. Lys206 carries the post-translational modification N6-(pyridoxal phosphate)lysine. Thr241 contacts pyridoxal 5'-phosphate. Cys328 functions as the Cysteine persulfide intermediate in the catalytic mechanism. Cys328 lines the [2Fe-2S] cluster pocket.

The protein belongs to the class-V pyridoxal-phosphate-dependent aminotransferase family. NifS/IscS subfamily. In terms of assembly, homodimer. Forms a heterotetramer with IscU, interacts with other sulfur acceptors. Pyridoxal 5'-phosphate serves as cofactor.

The protein resides in the cytoplasm. The catalysed reaction is (sulfur carrier)-H + L-cysteine = (sulfur carrier)-SH + L-alanine. It participates in cofactor biosynthesis; iron-sulfur cluster biosynthesis. In terms of biological role, master enzyme that delivers sulfur to a number of partners involved in Fe-S cluster assembly, tRNA modification or cofactor biosynthesis. Catalyzes the removal of elemental sulfur atoms from cysteine to produce alanine. Functions as a sulfur delivery protein for Fe-S cluster synthesis onto IscU, an Fe-S scaffold assembly protein, as well as other S acceptor proteins. This chain is Cysteine desulfurase IscS, found in Helicobacter pylori (strain J99 / ATCC 700824) (Campylobacter pylori J99).